Consider the following 229-residue polypeptide: Deoxyribose-phosphate aldolase (229 aa).

The active-site Proton donor/acceptor is the D84. K146 acts as the Schiff-base intermediate with acetaldehyde in catalysis. The Proton donor/acceptor role is filled by K188.

It belongs to the DeoC/FbaB aldolase family. DeoC type 1 subfamily.

The protein resides in the cytoplasm. It catalyses the reaction 2-deoxy-D-ribose 5-phosphate = D-glyceraldehyde 3-phosphate + acetaldehyde. It participates in carbohydrate degradation; 2-deoxy-D-ribose 1-phosphate degradation; D-glyceraldehyde 3-phosphate and acetaldehyde from 2-deoxy-alpha-D-ribose 1-phosphate: step 2/2. Catalyzes a reversible aldol reaction between acetaldehyde and D-glyceraldehyde 3-phosphate to generate 2-deoxy-D-ribose 5-phosphate. This Pyrobaculum neutrophilum (strain DSM 2338 / JCM 9278 / NBRC 100436 / V24Sta) (Thermoproteus neutrophilus) protein is Deoxyribose-phosphate aldolase.